A 460-amino-acid chain; its full sequence is A-type ATP synthase subunit B (460 aa).

It belongs to the ATPase alpha/beta chains family. As to quaternary structure, has multiple subunits with at least A(3), B(3), C, D, E, F, H, I and proteolipid K(x).

It localises to the cell membrane. Its function is as follows. Component of the A-type ATP synthase that produces ATP from ADP in the presence of a proton gradient across the membrane. The B chain is a regulatory subunit. The sequence is that of A-type ATP synthase subunit B from Methanosarcina barkeri.